The primary structure comprises 355 residues: Peptide chain release factor 1 (355 aa).

Glutamine 233 carries the post-translational modification N5-methylglutamine.

The protein belongs to the prokaryotic/mitochondrial release factor family. Post-translationally, methylated by PrmC. Methylation increases the termination efficiency of RF1.

The protein localises to the cytoplasm. In terms of biological role, peptide chain release factor 1 directs the termination of translation in response to the peptide chain termination codons UAG and UAA. The polypeptide is Peptide chain release factor 1 (Caldicellulosiruptor saccharolyticus (strain ATCC 43494 / DSM 8903 / Tp8T 6331)).